Consider the following 272-residue polypeptide: Methylesterase 8 (272 aa).

The Acyl-ester intermediate role is filled by Ser102. Active-site charge relay system residues include Asp222 and His250.

It belongs to the AB hydrolase superfamily. Methylesterase family.

Its function is as follows. Methylesterase shown to have carboxylesterase activity in vitro. This chain is Methylesterase 8, found in Arabidopsis thaliana (Mouse-ear cress).